The sequence spans 312 residues: Pyridoxal kinase (312 aa).

At Met-1 the chain carries N-acetylmethionine. Residues Ser-12 and Thr-47 each coordinate pyridoxal. Thr-47 is a pyridoxal 5'-phosphate binding site. Ser-59 carries the post-translational modification Phosphoserine. Asp-113 contacts ATP. Asp-113 lines the Na(+) pocket. Residue Asp-118 coordinates Mg(2+). Residue Thr-148 coordinates Na(+). 150–153 (NQFE) contacts ATP. Phosphoserine is present on Ser-164. Thr-186 contributes to the Na(+) binding site. ATP is bound at residue 186–187 (TS). Phosphoserine is present on Ser-213. Residues 226-228 (VDP) and Thr-233 contribute to the ATP site. Pyridoxal 5'-phosphate is bound at residue 234–235 (GD). Asp-235 functions as the Proton acceptor in the catalytic mechanism. Residue Ser-285 is modified to Phosphoserine.

It belongs to the pyridoxine kinase family. In terms of assembly, homodimer. The cofactor is Zn(2+). Mg(2+) is required as a cofactor.

The protein resides in the cytoplasm. Its subcellular location is the cytosol. The catalysed reaction is pyridoxal + ATP = pyridoxal 5'-phosphate + ADP + H(+). It carries out the reaction pyridoxamine + ATP = pyridoxamine 5'-phosphate + ADP + H(+). It catalyses the reaction pyridoxine + ATP = pyridoxine 5'-phosphate + ADP + H(+). It functions in the pathway cofactor metabolism; pyridoxal 5'-phosphate salvage; pyridoxal 5'-phosphate from pyridoxal: step 1/1. Its pathway is cofactor metabolism; pyridoxal 5'-phosphate salvage; pyridoxine 5'-phosphate from pyridoxine: step 1/1. It participates in cofactor metabolism; pyridoxal 5'-phosphate salvage; pyridoxamine 5'-phosphate from pyridoxamine: step 1/1. Its activity is regulated as follows. Activity is increased in the presence of K(+)or Na(+). Functionally, catalyzes the phosphorylation of the dietary vitamin B6 vitamers pyridoxal (PL), pyridoxine (PN) and pyridoxamine (PM) to form pyridoxal 5'-phosphate (PLP), pyridoxine 5'-phosphate (PNP) and pyridoxamine 5'-phosphate (PMP), respectively. PLP is the active form of vitamin B6, and acts as a cofactor for over 140 different enzymatic reactions. The chain is Pyridoxal kinase (Pdxk) from Rattus norvegicus (Rat).